A 129-amino-acid chain; its full sequence is Glycine cleavage system H protein (129 aa).

Residues 24-106 (SYTVGISEHA…FGDGWFFRVM (83 aa)) enclose the Lipoyl-binding domain. Lys-65 carries the N6-lipoyllysine modification.

The protein belongs to the GcvH family. The glycine cleavage system is composed of four proteins: P, T, L and H. (R)-lipoate serves as cofactor.

In terms of biological role, the glycine cleavage system catalyzes the degradation of glycine. The H protein shuttles the methylamine group of glycine from the P protein to the T protein. This Shewanella sediminis (strain HAW-EB3) protein is Glycine cleavage system H protein.